Reading from the N-terminus, the 2216-residue chain is RNA-directed RNA polymerase L (2216 aa).

The segment at 26 to 289 (KTSFLSQVNL…ETRTAMLDER (264 aa)) is endonuclease. 3 residues coordinate Mn(2+): Glu-51, Asp-88, and Glu-101. Residue Lys-114 is part of the active site. One can recognise a RdRp catalytic domain in the interval 1167–1364 (LDMKCVVRLS…YLSSKFNKFV (198 aa)). Asp-1323 lines the Mg(2+) pocket.

Belongs to the Bunyavirales RNA polymerase family. As to quaternary structure, homomultimer; the oligomeric structure is essential for the polymerase activity. Interacts with nucleoprotein N. Interacts with protein Z; this interaction inhibits viral transcription and replication, Z partially blocks the product exit tunnel for the releasing nascent RNA product. The cofactor is Mn(2+). Mg(2+) serves as cofactor.

Its subcellular location is the virion. The protein resides in the host cytoplasm. The catalysed reaction is RNA(n) + a ribonucleoside 5'-triphosphate = RNA(n+1) + diphosphate. Functionally, RNA-dependent RNA polymerase, which is responsible for the replication and transcription of the viral RNA genome using antigenomic RNA as an intermediate. During transcription, synthesizes subgenomic RNAs and assures their capping by a cap-snatching mechanism, which involves the endonuclease activity cleaving the host capped pre-mRNAs. These short capped RNAs are then used as primers for viral transcription. The 3'-end of subgenomic mRNAs molecules are heterogeneous and not polyadenylated. The replicase function is to direct synthesis of antigenomic and genomic RNA which are encapsidated and non capped. As a consequence of the use of the same enzyme for both transcription and replication, these mechanisms need to be well coordinated. These processes may be regulated by proteins N and Z in a dose-dependent manner. Z protein inhibits the viral polymerase L und thus the viral transcription and RNA synthesis. This is RNA-directed RNA polymerase L from Bear Canyon mammarenavirus (isolate Mouse/United States/AV A0070039/2000) (BCNV).